The following is a 358-amino-acid chain: Plancitoxin-1 (358 aa).

The signal sequence occupies residues 1–26 (MPSSVIMFTFLALTVLTAVMVGTSEA). N274 carries N-linked (GlcNAc...) asparagine glycosylation. H303 is an active-site residue.

It belongs to the DNase II family. In terms of assembly, plancitoxin is a heterodimer of alpha and beta subunits; disulfide-linked by a single disulfide bond. As to expression, venom gland.

It localises to the secreted. The enzyme catalyses Endonucleolytic cleavage to nucleoside 3'-phosphates and 3'-phosphooligonucleotide end-products.. Functionally, hydrolyzes DNA with an optimum pH of 7.2. Is potently hepatotoxic. It induces caspase-independent apoptosis (on rat liver cells) through the following procedure: binding to a specific receptor in the cytoplasmic membrane, entering the cell, entering the nucleus and degrading DNA. The polypeptide is Plancitoxin-1 (Acanthaster planci (Crown-of-thorns starfish)).